Here is a 452-residue protein sequence, read N- to C-terminus: Membrane-bound acylglycerophosphatidylinositol O-acyltransferase mboa-7 (452 aa).

4 helical membrane passes run 4 to 24, 53 to 73, 79 to 99, and 104 to 124; these read IIGL…FSFA, PRIA…AFAP, FYVF…HYFL, and VASH…GITF. N-linked (GlcNAc...) asparagine glycosylation is present at Asn137. Transmembrane regions (helical) follow at residues 153 to 173, 220 to 240, and 244 to 264; these read FAYF…YQML, AIWE…FVVF, and VYSA…GIYP. The N-linked (GlcNAc...) asparagine glycan is linked to Asn319. His350 is an active-site residue. The chain crosses the membrane as a helical span at residues 354 to 374; it reads AGYFMSFGVVAMCAILEDVIF. Asn414 is a glycosylation site (N-linked (GlcNAc...) asparagine). The chain crosses the membrane as a helical span at residues 421 to 441; the sequence is FWSSIYYWLPLLCVPFYIYSV.

The protein belongs to the membrane-bound acyltransferase family.

Its subcellular location is the membrane. The catalysed reaction is a 1-acyl-sn-glycero-3-phospho-(1D-myo-inositol) + an acyl-CoA = a 1,2-diacyl-sn-glycero-3-phospho-(1D-myo-inositol) + CoA. The enzyme catalyses a fatty acyl-[ACP] + a 1-acyl-sn-glycero-3-phosphate = a 1,2-diacyl-sn-glycero-3-phosphate + holo-[ACP]. It functions in the pathway lipid metabolism; phospholipid metabolism. In terms of biological role, acyltransferase which mediates the conversion of lysophosphatidylinositol (1-acylglycerophosphatidylinositol or LPI) into phosphatidylinositol (1,2-diacyl-sn-glycero-3-phosphoinositol or PI) (LPIAT activity). Prefers arachidonoyl-CoA or eicosapentaenoic acid (EPA) as the acyl donor. Prefers sn-2-LPI rather than sn-1-LPI as the acyl acceptor. Lysophospholipid acyltransferases (LPLATs) catalyze the reacylation step of the phospholipid remodeling pathway also known as the Lands cycle. The protein is Membrane-bound acylglycerophosphatidylinositol O-acyltransferase mboa-7 of Caenorhabditis briggsae.